Consider the following 156-residue polypeptide: UPF0266 membrane protein NT01EI_1718 (156 aa).

3 consecutive transmembrane segments (helical) span residues 6–26 (IALL…EAIM), 46–63 (DSLI…RNIS), and 67–87 (APFT…IFYL).

The protein belongs to the UPF0266 family.

Its subcellular location is the cell inner membrane. The polypeptide is UPF0266 membrane protein NT01EI_1718 (Edwardsiella ictaluri (strain 93-146)).